An 892-amino-acid polypeptide reads, in one-letter code: Dystroglycan 1 (892 aa).

The N-terminal stretch at 1-27 is a signal peptide; it reads MRMSAGLSLLLPLWGRTFLLLLSVAMA. Over 28–750 the chain is Extracellular; that stretch reads QSHWPSEAGR…SSEDDVYLHT (723 aa). The segment at 30-405 is required for laminin recognition; the sequence is HWPSEAGRDW…GQIRPTMTIP (376 aa). The interval 46–68 is O-glycosylated at one site; the sequence is SMHSVLSDLHEAVPTVVGIPDGI. Residue asparagine 138 is glycosylated (N-linked (GlcNAc...) asparagine). Cysteine 179 and cysteine 261 are oxidised to a cystine. The mucin-like domain stretch occupies residues 313–482; the sequence is ATPTPVTAIG…PPTRIRTTTS (170 aa). 3 O-linked (Man6P...) threonine glycosylation sites follow: threonine 314, threonine 316, and threonine 376. The interval 378–497 is disordered; it reads TLGPIQPTRV…GEPNQRPELK (120 aa). Low complexity predominate over residues 410 to 444; the sequence is PTAVATPPTTTTKKPRVSTPKPATPSTDSSTTTTR. The tract at residues 460–482 is O-glycosylated at seven sites with GalNAc; the sequence is TTKAPITRLETASPPTRIRTTTS. The Peptidase S72 domain occupies 600–709; that stretch reads RAPARFKAKF…SSIAVTGSGS (110 aa). 3 N-linked (GlcNAc...) asparagine glycosylation sites follow: asparagine 638, asparagine 646, and asparagine 658. Cysteine 666 and cysteine 710 are joined by a disulfide. The tract at residues 721 to 742 is disordered; that stretch reads PRRVPSEVPSTDVPDRDPEKSS. Basic and acidic residues predominate over residues 733–742; the sequence is VPDRDPEKSS. The chain crosses the membrane as a helical span at residues 751–771; it reads VIPAVVVAAILLIAGIIAMIC. The Cytoplasmic segment spans residues 772–892; that stretch reads YRKKRKGKLT…YRSPPPYVPP (121 aa). The short motif at 773-779 is the Nuclear localization signal element; the sequence is RKKRKGK. Threonine 787 carries the phosphothreonine modification. Residues 816–892 are required for interaction with CAV3; that stretch reads LQEEKAPLPP…YRSPPPYVPP (77 aa). The segment at 820–892 is disordered; the sequence is KAPLPPPEYP…YRSPPPYVPP (73 aa). Positions 829 to 843 are enriched in polar residues; that stretch reads PNQSVPETTPLNQDT. Residues 856-867 are compositionally biased toward pro residues; that stretch reads NAPPYQPPPPFT. The required for binding DMD and UTRN stretch occupies residues 877 to 892; it reads PKNMTPYRSPPPYVPP. The short motif at 886-889 is the PPXY motif element; the sequence is PPPY. Tyrosine 889 is modified (phosphotyrosine; by SRC).

As to quaternary structure, monomer. Heterodimer of alpha- and beta-dystroglycan subunits which are the central components of the dystrophin-glycoprotein complex. This complex then can form a dystrophin-associated glycoprotein complex (DGC) which is composed of three subcomplexes: a cytoplasmic complex comprised of DMD (or UTRN), DTNA and a number of syntrophins, such as SNTB1, SNTB2, SNTG1 and SNTG2, the transmembrane dystroglycan complex, and the sarcoglycan-sarcospan complex. Interacts (via the N-terminal of alphaDAG1) with LARGE1; the interaction enhances laminin binding. Interacts with SGCD. Interacts with AGR2 and AGR3. Interacts (betaDAG1) with DMD; the interaction is inhibited by phosphorylation on the PPXY motif. Interacts (betaDAG1, via its PPXY motif) with UTRN (via its WWW and ZZ domains); the interaction is inhibited by phosphorylation on the PPXY motif. Interacts (betaDAG1, via its phosphorylated PPXY motif) with the SH2 domain-containing proteins, FYN, CSK, NCK and SHC. Interacts (betaDAG1) with CAV3 (via a central WW-like domain); the interaction disrupts the binding of DMD. BetaDAG1 directly interacts with ANK3, but not with ANK2; this interaction does not interfere with DMD-binding and is required for retention at costameres. Identified in a dystroglycan complex that contains at least PRX, DRP2, UTRN, DMD and DAG1. Interacts with POMGNT1. BetaDAG1 interacts with CD93. O-glycosylated. POMGNT1 catalyzes the initial addition of N-acetylglucosamine, giving rise to the GlcNAc(beta1-2)Man(alpha1-)O-Ser/Thr moiety and thus providing the necessary basis for the addition of further carbohydrate moieties. Heavily O-glycosylated comprising of up to two thirds of its mass and the carbohydrate composition differs depending on tissue type. Mucin-type O-glycosylation is important for ligand binding activity. O-mannosylation is found in high abundance in both brain and muscle where the most abundant glycan is Sia-alpha-2-3-Gal-beta-1-4-Glc-NAc-beta-1-2-Man. In muscle, glycosylation on Thr-314, Thr-316 and Thr-376 by a phosphorylated O-mannosyl glycan with the structure 2-(N-acetylamido)-2-deoxygalactosyl-beta-1,3-2-(N-acetylamido)-2-deoxyglucosyl-beta-1,4-6-phosphomannose is mediated by like-acetylglucosaminyltransferase (LARGE1) protein amd is required for laminin binding. O-glycosylated in the N-terminal region with a core 1 or possibly core 8 glycan. The brain form displays a unique glycosylation pattern which is absent in other tissues; this form shows enhanced binding to laminin LAMA5 compared to the skeletal muscle form. In terms of processing, N-glycosylated. Post-translationally, autolytic cleavage produces the alpha and beta subunits. In cutaneous cells, as well as in certain pathological conditions, shedding of beta-dystroglycan can occur releasing a peptide of about 30 kDa. SRC-mediated phosphorylation of the PPXY motif of the beta subunit recruits SH2 domain-containing proteins, but inhibits binding to WWW domain-containing proteins, DMD and UTRN. This phosphorylation also inhibits nuclear entry.

The protein localises to the secreted. The protein resides in the extracellular space. It localises to the cell membrane. Its subcellular location is the cytoplasm. It is found in the cytoskeleton. The protein localises to the nucleus. The protein resides in the nucleoplasm. It localises to the sarcolemma. Its subcellular location is the postsynaptic cell membrane. In terms of biological role, the dystroglycan complex is involved in a number of processes including laminin and basement membrane assembly, sarcolemmal stability, cell survival, peripheral nerve myelination, nodal structure, cell migration, and epithelial polarization. Its function is as follows. Extracellular peripheral glycoprotein that acts as a receptor for extracellular matrix proteins containing laminin-G domains. Receptor for laminin-2 (LAMA2) and agrin in peripheral nerve Schwann cells. Also acts as a receptor for laminin LAMA5. Functionally, transmembrane protein that plays important roles in connecting the extracellular matrix to the cytoskeleton. Acts as a cell adhesion receptor in both muscle and non-muscle tissues. Receptor for both DMD and UTRN and, through these interactions, scaffolds axin to the cytoskeleton. Also functions in cell adhesion-mediated signaling and implicated in cell polarity. The polypeptide is Dystroglycan 1 (Canis lupus familiaris (Dog)).